The sequence spans 426 residues: Dihydrofolate synthase/folylpolyglutamate synthase (426 aa).

An ATP-binding site is contributed by 58–61; the sequence is GKGS. Ser82 is a Mg(2+) binding site. 121–124 serves as a coordination point for 7,8-dihydropteroate; the sequence is TRFE. Mg(2+) is bound at residue Glu145. Residue 152–154 participates in 7,8-dihydropteroate binding; that stretch reads LDA. His172 contributes to the Mg(2+) binding site. ATP is bound by residues Arg289 and Asp302.

Belongs to the folylpolyglutamate synthase family. In terms of assembly, monomer. Requires Mg(2+) as cofactor.

It catalyses the reaction 7,8-dihydropteroate + L-glutamate + ATP = 7,8-dihydrofolate + ADP + phosphate + H(+). It carries out the reaction (6S)-5,6,7,8-tetrahydrofolyl-(gamma-L-Glu)(n) + L-glutamate + ATP = (6S)-5,6,7,8-tetrahydrofolyl-(gamma-L-Glu)(n+1) + ADP + phosphate + H(+). The enzyme catalyses 10-formyltetrahydrofolyl-(gamma-L-Glu)(n) + L-glutamate + ATP = 10-formyltetrahydrofolyl-(gamma-L-Glu)(n+1) + ADP + phosphate + H(+). The catalysed reaction is (6R)-5,10-methylenetetrahydrofolyl-(gamma-L-Glu)(n) + L-glutamate + ATP = (6R)-5,10-methylenetetrahydrofolyl-(gamma-L-Glu)(n+1) + ADP + phosphate + H(+). The protein operates within cofactor biosynthesis; tetrahydrofolate biosynthesis; 7,8-dihydrofolate from 2-amino-4-hydroxy-6-hydroxymethyl-7,8-dihydropteridine diphosphate and 4-aminobenzoate: step 2/2. It participates in cofactor biosynthesis; tetrahydrofolylpolyglutamate biosynthesis. Functionally, functions in two distinct reactions of the de novo folate biosynthetic pathway. Catalyzes the addition of a glutamate residue to dihydropteroate (7,8-dihydropteroate or H2Pte) to form dihydrofolate (7,8-dihydrofolate monoglutamate or H2Pte-Glu). Also catalyzes successive additions of L-glutamate to tetrahydrofolate or 10-formyltetrahydrofolate or 5,10-methylenetetrahydrofolate, leading to folylpolyglutamate derivatives. This is Dihydrofolate synthase/folylpolyglutamate synthase (folC) from Buchnera aphidicola subsp. Baizongia pistaciae (strain Bp).